The following is a 1338-amino-acid chain: ABC-type transporter kk1G (1338 aa).

Residues 1-21 are disordered; sequence MSAIELPPLRSRSEEAARAEH. The segment covering 11 to 21 has biased composition (basic and acidic residues); that stretch reads SRSEEAARAEH. 6 helical membrane passes run 75 to 95, 130 to 150, 203 to 223, 230 to 250, 312 to 332, and 340 to 360; these read YFLISLCCFTSIGAGTAMPLM, LYIFYLFIGKFAMSYISMLAI, HFATLFQSLAFTVGLYVVALV, LIASTGLPFILIVYGAMFPPF, TMSPAMVAMYGIFGITFWFGI, and ISSVGDITVVLFSVMMAVMNI. One can recognise an ABC transmembrane type-1 1 domain in the interval 80–372; sequence LCCFTSIGAG…VASPIISIAK (293 aa). In terms of domain architecture, ABC transporter 1 spans 405-706; that stretch reads ITFINVAFSY…GDGVYYGLVH (302 aa). 440–447 provides a ligand contact to ATP; the sequence is GPSGSGKS. Disordered stretches follow at residues 473–518 and 715–747; these read EIPS…TCTG and EDDDDHSSSLENIKMNDTKEDTASSGFEGHASR. Transmembrane regions (helical) follow at residues 777–797, 816–836, 895–917, 919–941, 1003–1023, and 1037–1057; these read VCCIGILGAGAVYPLQAYIFA, FWAGMFGVLAGGVGLSYYLLG, MSMALIACTNLLGCTIIAFVYGW, LSLVGLFAALPLILGAGLVRTRL, IIFAASDSLELACMSLTFWYG, and FFIVYTAIIQGATAAGIWFSF. Residues 777–1063 form the ABC transmembrane type-1 2 domain; it reads VCCIGILGAG…WFSFTPSMAQ (287 aa). An ABC transporter 2 domain is found at 1096–1333; it reads IEFQHVSFKY…KGVYWQMCQA (238 aa). Residue 1130-1137 coordinates ATP; sequence GSSGCGKS.

Belongs to the ABC transporter superfamily. ABCB family. Multidrug resistance exporter (TC 3.A.1.201) subfamily.

The protein resides in the cell membrane. Its pathway is secondary metabolite biosynthesis. Functionally, ABC transporter; part of the gene cluster that mediates the biosynthesis of KK-1, a novel cyclic depsipeptide with 10 residues which is a promising active compound with high activity against many plant pathogens, especially Botrytis cinerea. Is probably directly involved in the secretion of KK-1 and thus confers self-tolerance against KK-1. This Curvularia clavata protein is ABC-type transporter kk1G.